The primary structure comprises 161 residues: Allophycocyanin alpha chain (161 aa).

Asparagine 71 carries the post-translational modification N4-methylasparagine. (2R,3E)-phycocyanobilin is bound at residue cysteine 81.

The protein belongs to the phycobiliprotein family. In terms of assembly, heterodimer of an alpha and a beta chain. Post-translationally, contains one covalently linked phycocyanobilin chromophore.

It is found in the plastid. The protein localises to the chloroplast thylakoid membrane. Functionally, light-harvesting photosynthetic bile pigment-protein from the phycobiliprotein complex. Allophycocyanin has a maximum absorption at approximately 650 nanometers. This is Allophycocyanin alpha chain (apcA) from Aglaothamnion neglectum (Red alga).